A 950-amino-acid chain; its full sequence is Translation initiation factor IF-2 (950 aa).

Basic and acidic residues-rich tracts occupy residues 128 to 158, 165 to 186, 200 to 234, and 291 to 312; these read KPKVAEPVKKSEPKAAAKAEETKVEKVEAKA, AEVKTENVADKKEPVVTEEKKK, KRAEDIKKEQAAARPEKKKFDKNRNDRNNRNDNRR, and NRRDRDRKKTDSNRDNTKDGNR. Residues 128–354 are disordered; it reads KPKVAEPVKK…NNQSSSVPAT (227 aa). 2 stretches are compositionally biased toward polar residues: residues 322-336 and 343-353; these read NRNQVRNARNSNWNQ and YQNNQSSSVPA. The tr-type G domain occupies 448-619; that stretch reads ERPAVVTIMG…LLVAEVQELK (172 aa). The tract at residues 457–464 is G1; the sequence is GHVDHGKT. 457–464 serves as a coordination point for GTP; that stretch reads GHVDHGKT. Residues 482-486 form a G2 region; that stretch reads GITQH. The tract at residues 503-506 is G3; the sequence is DTPG. Residues 503–507 and 557–560 contribute to the GTP site; these read DTPGH and NKID. Residues 557-560 form a G4 region; the sequence is NKID. The segment at 595–597 is G5; the sequence is SAK.

The protein belongs to the TRAFAC class translation factor GTPase superfamily. Classic translation factor GTPase family. IF-2 subfamily.

The protein resides in the cytoplasm. Functionally, one of the essential components for the initiation of protein synthesis. Protects formylmethionyl-tRNA from spontaneous hydrolysis and promotes its binding to the 30S ribosomal subunits. Also involved in the hydrolysis of GTP during the formation of the 70S ribosomal complex. In Lactococcus lactis subsp. cremoris (strain MG1363), this protein is Translation initiation factor IF-2.